Here is a 259-residue protein sequence, read N- to C-terminus: Histidinol-phosphatase (259 aa).

Residues Glu66, Asp82, Ile84, Asp85, and Asp207 each coordinate Mg(2+). Glu66 provides a ligand contact to substrate. Residues 84-87 (IDGT) and Asp207 contribute to the substrate site.

The protein belongs to the inositol monophosphatase superfamily. It depends on Mg(2+) as a cofactor.

It carries out the reaction L-histidinol phosphate + H2O = L-histidinol + phosphate. The protein operates within amino-acid biosynthesis; L-histidine biosynthesis; L-histidine from 5-phospho-alpha-D-ribose 1-diphosphate: step 8/9. In terms of biological role, catalyzes the dephosphorylation of histidinol-phosphate to histidinol, the direct precursor of histidine. The sequence is that of Histidinol-phosphatase (hisN) from Chlorobaculum parvum (strain DSM 263 / NCIMB 8327) (Chlorobium vibrioforme subsp. thiosulfatophilum).